A 310-amino-acid chain; its full sequence is Homoserine kinase (310 aa).

ATP is bound at residue 91–101; it reads PIGSGLGSSAC.

Belongs to the GHMP kinase family. Homoserine kinase subfamily.

It localises to the cytoplasm. The catalysed reaction is L-homoserine + ATP = O-phospho-L-homoserine + ADP + H(+). Its pathway is amino-acid biosynthesis; L-threonine biosynthesis; L-threonine from L-aspartate: step 4/5. Catalyzes the ATP-dependent phosphorylation of L-homoserine to L-homoserine phosphate. This Escherichia coli O6:H1 (strain CFT073 / ATCC 700928 / UPEC) protein is Homoserine kinase.